The following is a 296-amino-acid chain: 5,10-methylenetetrahydrofolate reductase (296 aa).

The active-site Proton donor/acceptor is the E28. T59 is an NADH binding site. Positions 60, 62, 88, 118, 119, 120, 132, 152, 156, 159, 165, 168, 171, and 172 each coordinate FAD. Position 120 (D120) interacts with (6S)-5-methyl-5,6,7,8-tetrahydrofolate. Residue Q183 participates in NADH binding. Q183, Q219, and R279 together coordinate (6S)-5-methyl-5,6,7,8-tetrahydrofolate.

It belongs to the methylenetetrahydrofolate reductase family. As to quaternary structure, homotetramer. The cofactor is FAD.

It catalyses the reaction (6S)-5-methyl-5,6,7,8-tetrahydrofolate + NAD(+) = (6R)-5,10-methylene-5,6,7,8-tetrahydrofolate + NADH + H(+). It functions in the pathway one-carbon metabolism; tetrahydrofolate interconversion. Its pathway is amino-acid biosynthesis; L-methionine biosynthesis via de novo pathway. Catalyzes the NADH-dependent reduction of 5,10-methylenetetrahydrofolate to 5-methyltetrahydrofolate. Is required to provide the methyl group necessary for methionine synthetase to convert homocysteine to methionine; the methyl group is given by 5-methyltetrahydrofolate. Can also use NADPH as the reductant, but much less effectively than NADH. The sequence is that of 5,10-methylenetetrahydrofolate reductase from Escherichia coli (strain K12).